The chain runs to 225 residues: Heptaprenylglyceryl phosphate synthase (225 aa).

Lys6 contacts sn-glycerol 1-phosphate. Positions 8 and 34 each coordinate Mg(2+). Residues 153-158 (YVEYSG), Gly183, and 203-204 (GN) contribute to the sn-glycerol 1-phosphate site.

It belongs to the GGGP/HepGP synthase family. Group I subfamily. As to quaternary structure, homodimer. Mg(2+) is required as a cofactor.

The catalysed reaction is sn-glycerol 1-phosphate + all-trans-heptaprenyl diphosphate = 3-heptaprenyl-sn-glycero-1-phosphate + diphosphate. It functions in the pathway membrane lipid metabolism; glycerophospholipid metabolism. Functionally, prenyltransferase that catalyzes in vivo the transfer of the heptaprenyl moiety of heptaprenyl pyrophosphate (HepPP; 35 carbon atoms) to the C3 hydroxyl of sn-glycerol-1-phosphate (G1P), producing heptaprenylglyceryl phosphate (HepGP). This reaction is an ether-bond-formation step in the biosynthesis of archaea-type G1P-based membrane lipids found in Bacillales. The protein is Heptaprenylglyceryl phosphate synthase of Listeria monocytogenes serotype 4b (strain CLIP80459).